The following is a 55-amino-acid chain: Small ribosomal subunit protein eS31 (55 aa).

Residues C27, C30, C45, and C48 each coordinate Zn(2+). The C4-type zinc-finger motif lies at 27–48 (CSRCGKGFFMAQHKDRRSCGKC).

The protein belongs to the eukaryotic ribosomal protein eS31 family. In terms of assembly, part of the 30S ribosomal subunit. It depends on Zn(2+) as a cofactor.

This is Small ribosomal subunit protein eS31 from Cenarchaeum symbiosum (strain A).